The chain runs to 155 residues: Cardio acceleratory peptide 2b (155 aa).

Residues Met-1–Ala-26 form the signal peptide. Residues Glu-27–Asn-33 constitute a propeptide that is removed on maturation. Val-47 carries the post-translational modification Valine amide. Positions Ser-50–Gln-85 are excised as a propeptide. At Val-96 the chain carries Valine amide. Positions Ser-99–Asp-117 are excised as a propeptide. Leu-134 is modified (leucine amide). A propeptide spanning residues Ser-138 to Asn-155 is cleaved from the precursor.

The protein belongs to the pyrokinin family.

The protein localises to the secreted. Functionally, CAP-1 and CAP-2, but not CAP-3 are ligands for the Capa receptor. CAP-1 and CAP-2 are probably components of the signal transduction pathway that leads to Malpighian tubule fluid secretion via the second messenger nitric oxide. This chain is Cardio acceleratory peptide 2b, found in Drosophila pseudoobscura pseudoobscura (Fruit fly).